The primary structure comprises 248 residues: Superoxide dismutase [Mn] 1 (248 aa).

Residues 1–41 (MQTTFRRILILFVGLLVPLFFACQSNSQVDAAPSAAPQLSA) form the signal peptide. Mn(2+) contacts are provided by histidine 68, histidine 123, aspartate 208, and histidine 212.

It belongs to the iron/manganese superoxide dismutase family. Homodimer. The cofactor is Mn(2+).

It carries out the reaction 2 superoxide + 2 H(+) = H2O2 + O2. Destroys superoxide anion radicals which are normally produced within the cells and which are toxic to biological systems. This Leptolyngbya boryana (Plectonema boryanum) protein is Superoxide dismutase [Mn] 1 (sodA1).